Here is a 263-residue protein sequence, read N- to C-terminus: uncharacterized protein (263 aa).

The signal sequence occupies residues 1-22 (MEYLKRLALLISVIILTIFIMG). The N-palmitoyl cysteine moiety is linked to residue Cys-23. A lipid anchor (S-diacylglycerol cysteine) is attached at Cys-23.

This sequence belongs to the staphylococcal tandem lipoprotein family.

It localises to the cell membrane. This is an uncharacterized protein from Staphylococcus aureus (strain COL).